Here is a 568-residue protein sequence, read N- to C-terminus: Serine/threonine-protein kinase WNK2 (568 aa).

Residues 24-281 (GRYDEILGKG…ALELLQDPFL (258 aa)) form the Protein kinase domain. Residues 104-107 (TELF) and Lys-154 contribute to the ATP site. Residue Asp-171 is the Proton acceptor of the active site. Positions 453-473 (SSGEKSHHNHHEFDSSEDKSC) are disordered. The span at 463-472 (HEFDSSEDKS) shows a compositional bias: basic and acidic residues.

Belongs to the protein kinase superfamily. Ser/Thr protein kinase family. WNK subfamily. Autophosphorylated.

The enzyme catalyses L-seryl-[protein] + ATP = O-phospho-L-seryl-[protein] + ADP + H(+). It carries out the reaction L-threonyl-[protein] + ATP = O-phospho-L-threonyl-[protein] + ADP + H(+). Regulates flowering time by modulating the photoperiod pathway. Possesses kinase activity in vitro. The chain is Serine/threonine-protein kinase WNK2 (WNK2) from Arabidopsis thaliana (Mouse-ear cress).